The sequence spans 1374 residues: MYQYSNQTGNGVYGNPPMQPLQNYGSSGYQQTAPMQQPLQTGYQQPMQQTMNQNQGMQLPQQQYQQQQPLQQQPMQQQPMQQQSFQQPQLQQPLQQQPTQTGMQQQPLQQQLTQSGMLQQPLQPQMQQSSQTIQPNQLNVQNTVQSQQSVQPLLPQQTGFYRQGNQPVLEPLKPTATGFVNSFANNGLDNNLKIPAIRLSFITAQDQAKFETLFRSIVTKGSNTVSGENCRAILMKSGLQPSQLARIWQLSDTNRAGELLFPEFALAMHLINNVLQGDSIPYELDSKTKNEVSSFIDAINLSVVSTESDFKTPFDDLFKPQQSLQPQGTGFLPQTSFGLPAQPTGGFGQPQPTTFGQLQAQVTGGFGQPQPTTFGLQPQTTGGFVQAQQVTGGIAQQPSMNPLTQQGTGFAQNQQGTGGFLQQQGTGSFNNAGFVQPQNTGSFVPQQQQQPVVQSQPIAPQSTGGFGPPMPTTFGIQPQSTGGFVQPQVTGGLQPALTGNIPQTSFGAQPFNQQLQPQATGYLPPSQFSATMPLTAQKTGFGNNEIYAQSNFNGPSFSTQESDIITSEEKSLFYKIFETFSQNRGVLDSATAVEIFRKSGLNRSDLEKIWNLCDINNTGQLNKQEFALGMHLVYGRLNGRSIPDRLPPSLIPSSTKILDNVKNQLISSSSDGNRKSFTRMDALSYKNDDNDKLPNFRNRRKNYPTDNDADKERQRRQEREREEAAKKKEQERKTKMDIERARKQGSFTNSEPEFTDVSVSEIEDIKRRITEAQQKLAVRNQSIPNDLKKRFNEVVARLPTLFVEIYKVDTEIMQARIELCKRRTPSSIIGTGPGGSITEDDRRKAKSKALLRSRMNALTGKGDNSDEPDIESESFTKEIEKIQSESAQNKKIIKDIRISISELSAPIRSIMTGSLPTCSSTDFEKWEIGVGLENDVREFVLTLKKGLLYVSEPSHMNSNQTLSHPPAAALKKEATGEDRAAQLKEQAQKRMKERLAKFGISRRETRDLESSKQQESGSTPDAVPAAQTANASQTPFEEVISSPQKMEVTSTAGEDNEEEDEEERKLKEQLELLKQKKNAEKEKRLADLRRQIEEAEKEEEHPSVAQSNSGNVQSSSNQPASVPVANSQPQNLQNTHITTKPLSLNQTGSSYDMASNTYFKPTQTSQSAFDREKAEQQRKIQRGLESDDDGWSDDDDDLYSKPNTAPQTAPVLDSSNTPQPGMNASVPAPIAPPIPTPQASSPAVPVAPPIPAVTPSESSIPMTSNADVAGADHLDQDTDISGAAASADKQNTSHVSHIPPVPVAPPLPQVSSIAPPPPLPNLSVPQPHETVDNDDGSDVLSIPDSVESDKEDLAPAGHTPAAMGIPPPPPLPNF.

Polar residues-rich tracts occupy residues 1–10 and 20–33; these read MYQYSNQTGN and PLQN…QQTA. 2 disordered regions span residues 1–33 and 52–114; these read MYQY…QQTA and NQNQ…QLTQ. EH domains follow at residues 206–295 and 569–657; these read DQAK…VSSF and EKSL…STKI. EF-hand domains are found at residues 239–274 and 601–636; these read LQPS…INNV and LNRS…VYGR. D614, N616, T618, Q620, and E625 together coordinate Ca(2+). 2 disordered regions span residues 668-737 and 971-1374; these read SSSD…TKMD and KKEA…LPNF. Positions 706–783 form a coiled coil; sequence DNDADKERQR…QKLAVRNQSI (78 aa). 2 stretches are compositionally biased toward basic and acidic residues: residues 708–737 and 971–1012; these read DADK…TKMD and KKEA…ESSK. The span at 1027–1053 shows a compositional bias: polar residues; it reads QTANASQTPFEEVISSPQKMEVTSTAG. A coiled-coil region spans residues 1050–1103; sequence STAGEDNEEEDEEERKLKEQLELLKQKKNAEKEKRLADLRRQIEEAEKEEEHPS. A compositionally biased stretch (basic and acidic residues) spans 1063–1102; that stretch reads ERKLKEQLELLKQKKNAEKEKRLADLRRQIEEAEKEEEHP. A compositionally biased stretch (low complexity) spans 1103–1118; the sequence is SVAQSNSGNVQSSSNQ. Residues 1124 to 1168 are compositionally biased toward polar residues; the sequence is VANSQPQNLQNTHITTKPLSLNQTGSSYDMASNTYFKPTQTSQSA. The segment covering 1169–1185 has biased composition (basic and acidic residues); that stretch reads FDREKAEQQRKIQRGLE. Residues 1186–1197 show a composition bias toward acidic residues; that stretch reads SDDDGWSDDDDD. 2 stretches are compositionally biased toward polar residues: residues 1201–1222 and 1257–1266; these read KPNT…QPGM and ESSIPMTSNA. Pro residues-rich tracts occupy residues 1299–1320 and 1365–1374; these read PPVP…PPLP and IPPPPPLPNF.

It belongs to the PAN1 family. As to quaternary structure, component of the PAN1 actin cytoskeleton-regulatory complex.

The protein localises to the cell membrane. Its subcellular location is the endosome membrane. It is found in the cytoplasm. The protein resides in the cytoskeleton. It localises to the actin patch. Component of the PAN1 actin cytoskeleton-regulatory complex required for the internalization of endosomes during actin-coupled endocytosis. The complex links the site of endocytosis to the cell membrane-associated actin cytoskeleton. Mediates uptake of external molecules and vacuolar degradation of plasma membrane proteins. Plays a role in the proper organization of the cell membrane-associated actin cytoskeleton and promotes its destabilization. The polypeptide is Actin cytoskeleton-regulatory complex protein PAN1 (PAN1) (Candida glabrata (strain ATCC 2001 / BCRC 20586 / JCM 3761 / NBRC 0622 / NRRL Y-65 / CBS 138) (Yeast)).